Here is a 270-residue protein sequence, read N- to C-terminus: ATP synthase subunit a (270 aa).

A run of 5 helical transmembrane segments spans residues 38-58, 98-118, 143-163, 208-228, and 239-259; these read VHID…GIFY, IAPL…MDLV, DVNI…YYSI, LFGN…MLPW, and AIFH…LTIV.

This sequence belongs to the ATPase A chain family. In terms of assembly, F-type ATPases have 2 components, CF(1) - the catalytic core - and CF(0) - the membrane proton channel. CF(1) has five subunits: alpha(3), beta(3), gamma(1), delta(1), epsilon(1). CF(0) has three main subunits: a(1), b(2) and c(9-12). The alpha and beta chains form an alternating ring which encloses part of the gamma chain. CF(1) is attached to CF(0) by a central stalk formed by the gamma and epsilon chains, while a peripheral stalk is formed by the delta and b chains.

The protein resides in the cell inner membrane. Its function is as follows. Key component of the proton channel; it plays a direct role in the translocation of protons across the membrane. This chain is ATP synthase subunit a, found in Vibrio alginolyticus.